A 285-amino-acid polypeptide reads, in one-letter code: Neuralized-like protein 2 (285 aa).

The tract at residues Met1–Glu20 is disordered. The NHR domain occupies Pro23 to Leu244. The region spanning Ser250–Glu285 is the SOCS box domain.

In terms of assembly, probable component the ECS(NEURL2) E3 ubiquitin-protein ligase complex consisting of ELOB/Elongin B, ELOC/Elongin C, CUL5, RBX1 and NEURL2. Interacts with CTNNB1. As to expression, expressed specifically in skeletal and cardiac muscles.

The protein localises to the cytoplasm. It functions in the pathway protein modification; protein ubiquitination. Functionally, plays an important role in the process of myofiber differentiation and maturation. Probable substrate-recognition component of a SCF-like ECS (Elongin BC-CUL2/5-SOCS-box protein) E3 ubiquitin-protein ligase complex, which mediates the ubiquitination of proteins. Probably contributes to catalysis through recognition and positioning of the substrate and the ubiquitin-conjugating enzyme. During myogenesis, controls the ubiquitination and degradation of the specific pool of CTNNB1/beta-catenin located at the sarcolemma. The polypeptide is Neuralized-like protein 2 (NEURL2) (Homo sapiens (Human)).